The sequence spans 430 residues: DD-carboxypeptidase/endopeptidase Mpg (430 aa).

Zn(2+) contacts are provided by H295, D299, and H375.

The protein belongs to the peptidase M23B family. As to quaternary structure, monomer. It depends on Zn(2+) as a cofactor. In terms of processing, likely to be synthesized as a proenzyme. The cleavage of the N-terminal domain is probably required for the activation of the enzyme.

It is found in the cell outer membrane. Its function is as follows. Has both endopeptidase and DD-carboxypeptidase activities. Degrades cell wall peptidoglycan (PG) to allow consummate expression of pili. This is DD-carboxypeptidase/endopeptidase Mpg from Neisseria meningitidis serogroup B (strain ATCC BAA-335 / MC58).